Here is a 582-residue protein sequence, read N- to C-terminus: Semenogelin-2 (582 aa).

Positions 1–23 (MKSIILFVLSLLLILEKQAAVMG) are cleaved as a signal peptide. 6 disordered regions span residues 26–65 (CGSK…SFSI), 132–159 (GGQA…SSQY), 272–295 (NLNQ…RTEE), 318–358 (TEEK…ERHL), 379–417 (EEQI…EERR), and 439–582 (EEQI…PVST). 2 stretches are compositionally biased toward polar residues: residues 31 to 40 (QLPSGSSQFP) and 137 to 159 (RGTQ…SSQY). Over residues 325–335 (KSQNQVTIHSQ) the composition is skewed to polar residues. Positions 336 to 345 (GQEHGHKENK) are enriched in basic and acidic residues. Polar residues-rich tracts occupy residues 379-397 (EEQI…SQAQ), 439-457 (EEQI…SQAQ), 487-496 (KDVSQSSTSF), and 506-524 (SQIQ…QNAK). Basic and acidic residues-rich tracts occupy residues 525–552 (GKSD…ESSE) and 559–582 (TEHE…PVST).

Belongs to the semenogelin family. As to quaternary structure, interacts with SERPINA5.

The protein resides in the secreted. Functionally, participates in the formation of a gel matrix (sperm coagulum) entrapping the accessory gland secretions and ejaculated spermatozoa. The polypeptide is Semenogelin-2 (SEMG2) (Hylobates lar (Lar gibbon)).